Reading from the N-terminus, the 463-residue chain is Quinolone resistance protein NorB (463 aa).

The next 14 helical transmembrane spans lie at 17–37 (IGIVLSVITFWLFAQSLVNVV), 53–73 (IAVSITALFSGMFVVGAGGLA), 86–106 (IILNILGSLLIIISNIPLLLI), 107–127 (IGRLIQGLSAACIMPATLSII), 142–162 (YWSIGSWGGSGVCSFFGGAVA), 165–185 (LGWRWIFILSIIISLIALFLI), 201–221 (FDIKGLVLLVIMLLSLNILIT), 230–250 (SLLFITILAIAIVSFSLFIVL), 273–293 (TASNFLLNGVAGTLIVANTFV), 299–319 (YSSLQAGSLSITYLVMVLIMI), 334–354 (PMLIGTAVLIVGECLISLTFL), 357–377 (ILYVICCIIGYLFFGLGLGIY), 403–423 (MASALGGAFGVALSGAVYAIV), and 435–455 (IALWLNAGMGILSFVIILLLV).

It belongs to the major facilitator superfamily. TCR/Tet family.

The protein localises to the cell membrane. Its function is as follows. Multidrug efflux pump that acts independently of NorA and is one of the factors that confers resistance against diverse quinolones and chemical compounds. The polypeptide is Quinolone resistance protein NorB (norB) (Staphylococcus aureus (strain MRSA252)).